The primary structure comprises 173 residues: NADH-ubiquinone oxidoreductase chain 6 (173 aa).

5 helical membrane passes run 1-21 (MTYF…AVAS), 27-47 (YGVV…LSLG), 48-68 (VSFV…VVFV), 87-107 (VVGY…VGGF), and 139-159 (CGVG…FVVL).

The protein belongs to the complex I subunit 6 family.

It localises to the mitochondrion membrane. It catalyses the reaction a ubiquinone + NADH + 5 H(+)(in) = a ubiquinol + NAD(+) + 4 H(+)(out). In terms of biological role, core subunit of the mitochondrial membrane respiratory chain NADH dehydrogenase (Complex I) that is believed to belong to the minimal assembly required for catalysis. Complex I functions in the transfer of electrons from NADH to the respiratory chain. The immediate electron acceptor for the enzyme is believed to be ubiquinone. This is NADH-ubiquinone oxidoreductase chain 6 (MT-ND6) from Aethia pusilla (Least auklet).